Reading from the N-terminus, the 626-residue chain is Cysteine desulfurase (626 aa).

Disordered regions lie at residues 1–21 and 41–64; these read MTNT…SDPF and AGVS…PTTS. The tract at residues 1–225 is cargo-loading domain; the sequence is MTNTVPSVPA…AGAVGFDIHQ (225 aa). The segment at 226-626 is cysteine desulfurase domain; it reads VRRDFPILQE…RRIQTGSLAL (401 aa). Lys444 bears the N6-(pyridoxal phosphate)lysine mark. Cys582 acts as the Cysteine persulfide intermediate in catalysis.

The protein belongs to the class-V pyridoxal-phosphate-dependent aminotransferase family. Csd subfamily. In terms of assembly, there are 1-2 copies of this protein in each type 2A encapsulin shell. The cofactor is pyridoxal 5'-phosphate.

Its subcellular location is the encapsulin nanocompartment. It carries out the reaction (sulfur carrier)-H + L-cysteine = (sulfur carrier)-SH + L-alanine. With respect to regulation, encapsulated enzyme is 7-fold more active than encapsulated enzyme. In terms of biological role, cargo protein of a type 2A encapsulin nanocompartment probably involved in sulfur metabolism. Cysteine desulfurases mobilize the sulfur from L-cysteine to yield L-alanine, an essential step in sulfur metabolism for biosynthesis of a variety of sulfur-containing biomolecules. In Synechococcus elongatus (strain ATCC 33912 / PCC 7942 / FACHB-805) (Anacystis nidulans R2), this protein is Cysteine desulfurase.